A 130-amino-acid polypeptide reads, in one-letter code: Large ribosomal subunit protein bL21 (130 aa).

Belongs to the bacterial ribosomal protein bL21 family. Part of the 50S ribosomal subunit. Contacts protein L20.

This protein binds to 23S rRNA in the presence of protein L20. In Trichormus variabilis (strain ATCC 29413 / PCC 7937) (Anabaena variabilis), this protein is Large ribosomal subunit protein bL21.